Here is a 336-residue protein sequence, read N- to C-terminus: Ketol-acid reductoisomerase (NADP(+)) (336 aa).

The KARI N-terminal Rossmann domain occupies 1–182 (MAVIYYDKDA…GVTRAGVIET (182 aa)). NADP(+) is bound by residues 25-28 (YGSQ), R48, S51, S53, and 83-86 (DENQ). Residue H108 is part of the active site. G134 is an NADP(+) binding site. Residues 183 to 328 (TFKEETETDL…KELRKMMPWL (146 aa)) enclose the KARI C-terminal knotted domain. 4 residues coordinate Mg(2+): D191, E195, E227, and E231. S252 contacts substrate.

Belongs to the ketol-acid reductoisomerase family. Mg(2+) is required as a cofactor.

It catalyses the reaction (2R)-2,3-dihydroxy-3-methylbutanoate + NADP(+) = (2S)-2-acetolactate + NADPH + H(+). The catalysed reaction is (2R,3R)-2,3-dihydroxy-3-methylpentanoate + NADP(+) = (S)-2-ethyl-2-hydroxy-3-oxobutanoate + NADPH + H(+). It participates in amino-acid biosynthesis; L-isoleucine biosynthesis; L-isoleucine from 2-oxobutanoate: step 2/4. Its pathway is amino-acid biosynthesis; L-valine biosynthesis; L-valine from pyruvate: step 2/4. In terms of biological role, involved in the biosynthesis of branched-chain amino acids (BCAA). Catalyzes an alkyl-migration followed by a ketol-acid reduction of (S)-2-acetolactate (S2AL) to yield (R)-2,3-dihydroxy-isovalerate. In the isomerase reaction, S2AL is rearranged via a Mg-dependent methyl migration to produce 3-hydroxy-3-methyl-2-ketobutyrate (HMKB). In the reductase reaction, this 2-ketoacid undergoes a metal-dependent reduction by NADPH to yield (R)-2,3-dihydroxy-isovalerate. The polypeptide is Ketol-acid reductoisomerase (NADP(+)) (Thermotoga petrophila (strain ATCC BAA-488 / DSM 13995 / JCM 10881 / RKU-1)).